Here is a 421-residue protein sequence, read N- to C-terminus: Cyclin-A1 (421 aa).

The tract at residues 1–20 is disordered; the sequence is MRRHSSKSGVALPPVGQGPD.

It belongs to the cyclin family. Cyclin AB subfamily. In terms of assembly, interacts with the CDK2 and the CDC2 protein kinases to form a serine/threonine kinase holoenzyme complex. The cyclin subunit imparts substrate specificity to the complex. Does not bind CDK4 and CDK5 (in vitro). The cyclin A1-CDK2 complex interacts with transcription factor E2F-1 and RB proteins. Found in a complex with CDK2, CABLES1 and CCNE1. Interacts with INCA1 and KLHDC9. Post-translationally, polyubiquitinated via 'Lys-11'-linked ubiquitin by the anaphase-promoting complex (APC/C), leading to its degradation by the proteasome. Deubiquitinated and stabilized by USP37 enables entry into S phase. Ubiquitinated during the G1 phase by the SCF(FBXO31) complex, leading to its proteasomal degradation.

The protein resides in the nucleus. Functionally, may be involved in the control of the cell cycle at the G1/S (start) and G2/M (mitosis) transitions. May primarily function in the control of the germline meiotic cell cycle and additionally in the control of mitotic cell cycle in some somatic cells. In Rattus norvegicus (Rat), this protein is Cyclin-A1 (Ccna1).